A 207-amino-acid chain; its full sequence is NADH-quinone oxidoreductase subunit A (207 aa).

3 consecutive transmembrane segments (helical) span residues 6 to 26 (WSAIAFILAAIALVVFMLVVP), 62 to 82 (LVAIFFVIFDLEALYLYAYAV), and 87 to 107 (AGWLGFAAAAIFITILIIGLV).

Belongs to the complex I subunit 3 family. In terms of assembly, NDH-1 is composed of 14 different subunits. Subunits NuoA, H, J, K, L, M, N constitute the membrane sector of the complex.

The protein resides in the cell inner membrane. It carries out the reaction a quinone + NADH + 5 H(+)(in) = a quinol + NAD(+) + 4 H(+)(out). Its function is as follows. NDH-1 shuttles electrons from NADH, via FMN and iron-sulfur (Fe-S) centers, to quinones in the respiratory chain. The immediate electron acceptor for the enzyme in this species is believed to be ubiquinone. Couples the redox reaction to proton translocation (for every two electrons transferred, four hydrogen ions are translocated across the cytoplasmic membrane), and thus conserves the redox energy in a proton gradient. The protein is NADH-quinone oxidoreductase subunit A of Psychrobacter arcticus (strain DSM 17307 / VKM B-2377 / 273-4).